We begin with the raw amino-acid sequence, 351 residues long: Cobalt-precorrin-5B C(1)-methyltransferase (351 aa).

This sequence belongs to the CbiD family.

It carries out the reaction Co-precorrin-5B + S-adenosyl-L-methionine = Co-precorrin-6A + S-adenosyl-L-homocysteine. The protein operates within cofactor biosynthesis; adenosylcobalamin biosynthesis; cob(II)yrinate a,c-diamide from sirohydrochlorin (anaerobic route): step 6/10. Its function is as follows. Catalyzes the methylation of C-1 in cobalt-precorrin-5B to form cobalt-precorrin-6A. This Thermosipho africanus (strain TCF52B) protein is Cobalt-precorrin-5B C(1)-methyltransferase.